The following is a 219-amino-acid chain: 2-C-methyl-D-erythritol 4-phosphate cytidylyltransferase (219 aa).

The protein belongs to the IspD/TarI cytidylyltransferase family. IspD subfamily.

It carries out the reaction 2-C-methyl-D-erythritol 4-phosphate + CTP + H(+) = 4-CDP-2-C-methyl-D-erythritol + diphosphate. It functions in the pathway isoprenoid biosynthesis; isopentenyl diphosphate biosynthesis via DXP pathway; isopentenyl diphosphate from 1-deoxy-D-xylulose 5-phosphate: step 2/6. Its function is as follows. Catalyzes the formation of 4-diphosphocytidyl-2-C-methyl-D-erythritol from CTP and 2-C-methyl-D-erythritol 4-phosphate (MEP). The sequence is that of 2-C-methyl-D-erythritol 4-phosphate cytidylyltransferase from Endomicrobium trichonymphae.